The chain runs to 85 residues: Large ribosomal subunit protein bL27 (85 aa).

Residues 1–21 form a disordered region; sequence MAHKKAGGSTRNGRDSESKRL.

Belongs to the bacterial ribosomal protein bL27 family.

This chain is Large ribosomal subunit protein bL27, found in Ectopseudomonas mendocina (strain ymp) (Pseudomonas mendocina).